The chain runs to 331 residues: MDIGGPTNIRHVAHVTFDRFDGFLGLPSEFEPDVPRKAPSASATVFGVSTESMQLSYDSRGNCVPVILLLLQSRLYDQGGLQAEGVFRITGENSEEEFVREQLNKGIIPDGIDVHCLAGLIKAWFRELPRGVLDPLPSEQVMQCESDEDFVKVVRLLPQTEASLLNWAINLMADVIQFEHVNKMNSRNLALVFAPNMSQMADPLTALMYAVQVMKLLKSLTEKTVREREASSSVVDRRCSKEAEDGEKEKDNEEEEEDEEEEEEEEDEDEDEEEEGDGVYIIKEEEASEIIKVVADEHKSGSIKSEFEGSSATDSKGDNGVVQPPICSSNP.

A CRIB domain is found at 3-16; that stretch reads IGGPTNIRHVAHVT. Positions 48-225 constitute a Rho-GAP domain; that stretch reads VSTESMQLSY…LLKSLTEKTV (178 aa). Residues 227–251 show a composition bias toward basic and acidic residues; it reads EREASSSVVDRRCSKEAEDGEKEKD. Positions 227–331 are disordered; sequence EREASSSVVD…VQPPICSSNP (105 aa). Residues 252–277 show a composition bias toward acidic residues; the sequence is NEEEEEDEEEEEEEEDEDEDEEEEGD.

As to expression, expressed in differentiating xylem cells.

The protein resides in the cell membrane. Its function is as follows. Acts as a GTPase activator for the Rac-type GTPase by converting it to an inactive GDP-bound state. The sequence is that of Rho GTPase-activating protein 5 (ROPGAP5) from Arabidopsis thaliana (Mouse-ear cress).